Consider the following 102-residue polypeptide: Small ribosomal subunit protein uS10 (102 aa).

This sequence belongs to the universal ribosomal protein uS10 family. Part of the 30S ribosomal subunit.

Functionally, involved in the binding of tRNA to the ribosomes. The polypeptide is Small ribosomal subunit protein uS10 (Clostridium novyi (strain NT)).